The sequence spans 341 residues: D-aspartate oxidase (341 aa).

FAD is bound by residues Asp-36, Arg-37, Thr-43, Ser-44, Met-50, Gly-307, Ile-311, and Ser-312. The Microbody targeting signal signature appears at 339–341 (SKL).

Belongs to the DAMOX/DASOX family. Tetramer. Interacts with PEX5; the interaction is direct and required for localization of DDO to the peroxisome. Requires FAD as cofactor. In terms of tissue distribution, expressed in liver and kidney (at protein level). In the brain, expressed in the frontal, temporal, and occipital lobes of the cortex, hippocampus, striatum, diencephalon, brainstem, cerebellum, spinal cord, plexus choroiderus and ependyma (at protein level). Also expressed in the lung, muscle, heart, spleen, small intestine and testis (at protein level).

It is found in the peroxisome matrix. The protein resides in the cytoplasm. It localises to the cytosol. The enzyme catalyses D-aspartate + O2 + H2O = oxaloacetate + H2O2 + NH4(+). It catalyses the reaction D-glutamate + O2 + H2O = H2O2 + 2-oxoglutarate + NH4(+). Its activity is regulated as follows. Inhibited by aminooxyacetic acid, malonate, meso-tartrate and potassium bromide. In terms of biological role, selectively catalyzes the oxidative deamination of acidic amino acids. Suppresses the level of D-aspartate in the brain, an amino acid that can act as an agonist for glutamate receptors. Protects the organism from the toxicity of D-amino acids. May also function in the intestine. In Rattus norvegicus (Rat), this protein is D-aspartate oxidase.